Here is a 327-residue protein sequence, read N- to C-terminus: Zinc transport protein ZntB (327 aa).

Over 1–273 (MEAIKGSEVN…SRRSYTMSLM (273 aa)) the chain is Cytoplasmic. The helical transmembrane segment at 274–294 (AMVFLPSTFLTGLFGVNLGGI) threads the bilayer. Residues 295-300 (PGGGWH) are Periplasmic-facing. The chain crosses the membrane as a helical span at residues 301–321 (LGFSVFCVALVLLIGGVTWWL). The Cytoplasmic portion of the chain corresponds to 322 to 327 (HRSKWL).

Belongs to the CorA metal ion transporter (MIT) (TC 1.A.35) family.

Its subcellular location is the cell inner membrane. It catalyses the reaction Zn(2+)(out) + H(+)(out) = Zn(2+)(in) + H(+)(in). Its function is as follows. Zinc transporter. Acts as a Zn(2+):proton symporter, which likely mediates zinc ion uptake. In Cronobacter sakazakii (strain ATCC BAA-894) (Enterobacter sakazakii), this protein is Zinc transport protein ZntB.